The following is a 517-amino-acid chain: MIESDTSSIMSGIIRNSGQNHHPSPQEYRLLATTSDDDLPGDLQSLSWLTAVDVPRLQQMASGRVDLGGPCVPHPHPGALAGVADLHVGATPSPLLHGPAGMAPRGMPGLGPITGHRDSMSQFPVGGQPSSGLQDPPHLYSPATQPQFPLPPGAQQCPPVGLYGPPFGVRPPYPQPHVAVHSSQELHPKHYPKPIYSYSCLIAMALKNSKTGSLPVSEIYSFMKEHFPYFKTAPDGWKNSVRHNLSLNKCFEKVENKMSGSSRKGCLWALNLARIDKMEEEMHKWKRKDLAAIHRSMANPEELDKLISDRPESCRRPGKPGEPEAPVLTHATTVAVAHGCLAVSQLPPQPLMTLSLQSVPLHHQVQPQAHLAPDSPAPAQTPPLHALPDLSPSPLPHPAMGRAPVDFINISTDMNTEVDALDPSIMDFALQGNLWEEMKDEGFSLDTLGAFADSPLGCDLGASGLTPASGGSDQSFPDLQVTGLYTAYSTPDSVAASGTSSSSQYLGAQGNKPIALL.

A DNA-binding region (fork-head) is located at residues 193-289 (KPIYSYSCLI…EEMHKWKRKD (97 aa)). Disordered regions lie at residues 365–398 (VQPQAHLAPDSPAPAQTPPLHALPDLSPSPLPHP) and 497–517 (SGTSSSSQYLGAQGNKPIALL).

The protein localises to the nucleus. Its function is as follows. Transcription factor essential for neural and some non-neural tissues development, such as retina and lung respectively. Binds to an 11-bp consensus sequence containing the invariant tetranucleotide 5'-ACGC-3'. During development of the central nervous system, is required to specify the amacrine and horizontal cell fates from multipotent retinal progenitors while suppressing the alternative photoreceptor cell fates through activating DLL4-NOTCH signaling. Also acts synergistically with ASCL1/MASH1 to activate DLL4-NOTCH signaling and drive commitment of p2 progenitors to the V2b interneuron fates during spinal cord neurogenesis. In development of non-neural tissues, plays an essential role in the specification of the atrioventricular canal and is indirectly required for patterning the distal airway during lung development. This Homo sapiens (Human) protein is Forkhead box protein N4 (FOXN4).